A 1209-amino-acid polypeptide reads, in one-letter code: Zinc finger protein 804A (1209 aa).

The segment at 57-81 adopts a C2H2-type zinc-finger fold; it reads FYCELCDKQYYKHQEFDNHINSYDH. Basic and acidic residues predominate over residues 380–394; the sequence is VKHNEASTTEVENKN. Disordered stretches follow at residues 380–401 and 792–860; these read VKHNEASTTEVENKNGPETLAP and PEEF…MKPQ. Basic residues predominate over residues 807 to 819; the sequence is KPKKKRRRKRGRF. Composition is skewed to basic and acidic residues over residues 826-836 and 848-860; these read LELKENTDYPV and LISEDKKEKMKPQ.

The chain is Zinc finger protein 804A (ZNF804A) from Homo sapiens (Human).